Here is a 350-residue protein sequence, read N- to C-terminus: Ketol-acid reductoisomerase (NADP(+)) (350 aa).

In terms of domain architecture, KARI N-terminal Rossmann spans 3–183 (AQIWYEDDGD…GALRAGAIKT (181 aa)). NADP(+)-binding positions include 26 to 29 (YGSQ), arginine 49, serine 52, serine 54, and 84 to 87 (DQYQ). Residue histidine 109 is part of the active site. An NADP(+)-binding site is contributed by glycine 135. Residues 184–327 (TFKEETETDL…PKLRAMFSWN (144 aa)) form the KARI C-terminal knotted domain. Mg(2+)-binding residues include aspartate 192, glutamate 196, glutamate 228, and glutamate 232. Serine 253 lines the substrate pocket.

This sequence belongs to the ketol-acid reductoisomerase family. It depends on Mg(2+) as a cofactor.

It carries out the reaction (2R)-2,3-dihydroxy-3-methylbutanoate + NADP(+) = (2S)-2-acetolactate + NADPH + H(+). The enzyme catalyses (2R,3R)-2,3-dihydroxy-3-methylpentanoate + NADP(+) = (S)-2-ethyl-2-hydroxy-3-oxobutanoate + NADPH + H(+). The protein operates within amino-acid biosynthesis; L-isoleucine biosynthesis; L-isoleucine from 2-oxobutanoate: step 2/4. It functions in the pathway amino-acid biosynthesis; L-valine biosynthesis; L-valine from pyruvate: step 2/4. Functionally, involved in the biosynthesis of branched-chain amino acids (BCAA). Catalyzes an alkyl-migration followed by a ketol-acid reduction of (S)-2-acetolactate (S2AL) to yield (R)-2,3-dihydroxy-isovalerate. In the isomerase reaction, S2AL is rearranged via a Mg-dependent methyl migration to produce 3-hydroxy-3-methyl-2-ketobutyrate (HMKB). In the reductase reaction, this 2-ketoacid undergoes a metal-dependent reduction by NADPH to yield (R)-2,3-dihydroxy-isovalerate. The chain is Ketol-acid reductoisomerase (NADP(+)) from Bifidobacterium animalis subsp. lactis (strain AD011).